Consider the following 405-residue polypeptide: Secreted aspartic protease 8 (405 aa).

Positions 1-25 (MVSIITFTKNVLVTLAFALLAQGLA) are cleaved as a signal peptide. An N-linked (GlcNAc...) asparagine glycan is attached at asparagine 50. Residues 52–78 (TAHGQHHQSQQQQQQQQQQPAQKRGTV) are disordered. Residues 58 to 70 (HQSQQQQQQQQQQ) show a composition bias toward low complexity. The 304-residue stretch at 89–392 (YAATITVGSN…DLDGNTISLA (304 aa)) folds into the Peptidase A1 domain. Aspartate 107 is an active-site residue. Residue 107–109 (DTG) coordinates pepstatin A. Cysteine 122 and cysteine 134 are joined by a disulfide. Aspartate 292 is an active-site residue. Residue 292–296 (DSGTT) participates in pepstatin A binding. Residues cysteine 327 and cysteine 358 are joined by a disulfide bond.

This sequence belongs to the peptidase A1 family. In terms of assembly, monomer.

The protein resides in the secreted. The enzyme catalyses Preferential cleavage at the carboxyl of hydrophobic amino acids, but fails to cleave 15-Leu-|-Tyr-16, 16-Tyr-|-Leu-17 and 24-Phe-|-Phe-25 of insulin B chain. Activates trypsinogen, and degrades keratin.. Its function is as follows. Secreted aspartic peptidases (SAPs) are a group of ten acidic hydrolases considered as key virulence factors. These enzymes supply the fungus with nutrient amino acids as well as are able to degrade the selected host's proteins involved in the immune defense. Moreover, acts toward human hemoglobin though limited proteolysis to generate a variety of antimicrobial hemocidins, enabling to compete with the other microorganisms of the same physiological niche using the microbicidal peptides generated from the host protein. In terms of biological role, plays a key role in defense against host by cleaving histatin-5 (Hst 5), a peptide from human saliva that carries out fungicidal activity. The cleavage rate decreases in an order of SAP2 &gt; SAP9 &gt; SAP3 &gt; SAP7 &gt; SAP4 &gt; SAP1 &gt; SAP8. The hydrolysis of Hst 5 by SAP8 causes production of the DSHAKRHHGY, HHSHRGY and FHEKHHSHRGY peptides. The polypeptide is Secreted aspartic protease 8 (Candida albicans (Yeast)).